A 1462-amino-acid chain; its full sequence is DNA topoisomerase 2 (1462 aa).

ATP contacts are provided by residues Asn-79, Asn-108, 136 to 138 (SSN), and 149 to 156 (GRNGYGAK). Residues 332–334 (NKK) are interaction with DNA. Position 365-367 (365-367 (QTK)) interacts with ATP. The Toprim domain maps to 442-556 (CTLILTEGDS…SLLKVPSFLV (115 aa)). 3 residues coordinate Mg(2+): Glu-448, Asp-525, and Asp-527. The Topo IIA-type catalytic domain occupies 671-1131 (KDFVNKELIL…PTTSLWLKDL (461 aa)). The active-site O-(5'-phospho-DNA)-tyrosine intermediate is the Tyr-761. Positions 947 to 956 (KLTSTISTSN) are interaction with DNA. Disordered regions lie at residues 1040–1077 (PMPR…SVSV) and 1147–1462 (EDDR…EDDD). Acidic residues predominate over residues 1056 to 1068 (NDDDSEEQEDAEP). Residues 1167–1181 (PAKKPPQPRKNTKKA) show a composition bias toward basic residues. Residues 1198 to 1207 (AVEAAKPAEV) show a composition bias toward low complexity. Polar residues predominate over residues 1240–1250 (IESSGEKSQAM). A compositionally biased stretch (basic residues) spans 1260 to 1275 (AGKKQNNKRGGAKKKS). The segment covering 1282-1300 (SDSDNEVNDVDDDDDDFEE) has biased composition (acidic residues). Composition is skewed to low complexity over residues 1314-1334 (KPAA…APAA) and 1419-1430 (APQPARARPQRA). The span at 1442 to 1462 (SESEEDSDEDAELSDFEEDDD) shows a compositional bias: acidic residues.

It belongs to the type II topoisomerase family. As to quaternary structure, homodimer. Mg(2+) is required as a cofactor. The cofactor is Mn(2+). It depends on Ca(2+) as a cofactor. Abundant in proliferative tissues.

The catalysed reaction is ATP-dependent breakage, passage and rejoining of double-stranded DNA.. In terms of biological role, control of topological states of DNA by transient breakage and subsequent rejoining of DNA strands. Topoisomerase II makes double-strand breaks. The sequence is that of DNA topoisomerase 2 (TOP2) from Pisum sativum (Garden pea).